The following is a 416-amino-acid chain: Na(+)/H(+) antiporter NhaA (416 aa).

The next 11 helical transmembrane spans lie at 39–59 (GIVL…PWAA), 82–102 (LHFW…GLEI), 119–139 (LPVL…LALV), 146–166 (GWAV…ALLG), 175–195 (VFLL…IALF), 198–218 (GGLQ…VLLL), 234–254 (AVLW…GVVL), 281–301 (PWVT…VALG), 315–335 (LLMA…VLLA), 353–373 (WGGL…AIFI), and 390–410 (GVLL…WWLQ).

Belongs to the NhaA Na(+)/H(+) (TC 2.A.33) antiporter family.

The protein resides in the cell inner membrane. The catalysed reaction is Na(+)(in) + 2 H(+)(out) = Na(+)(out) + 2 H(+)(in). Functionally, na(+)/H(+) antiporter that extrudes sodium in exchange for external protons. The chain is Na(+)/H(+) antiporter NhaA from Acidovorax sp. (strain JS42).